The chain runs to 222 residues: Ribosomal RNA small subunit methyltransferase G (222 aa).

S-adenosyl-L-methionine-binding positions include Gly84, Phe89, 141-142 (VE), and Arg154.

It belongs to the methyltransferase superfamily. RNA methyltransferase RsmG family.

It localises to the cytoplasm. The enzyme catalyses guanosine(527) in 16S rRNA + S-adenosyl-L-methionine = N(7)-methylguanosine(527) in 16S rRNA + S-adenosyl-L-homocysteine. Its function is as follows. Specifically methylates the N7 position of guanine in position 527 of 16S rRNA. This is Ribosomal RNA small subunit methyltransferase G from Bradyrhizobium sp. (strain ORS 278).